Reading from the N-terminus, the 157-residue chain is Phosphopantetheine adenylyltransferase (157 aa).

Thr-10 contacts substrate. ATP is bound by residues Thr-10 to Phe-11 and His-18. Positions 42, 74, and 88 each coordinate substrate. ATP is bound by residues Gly-89–Arg-91, Glu-99, and Asn-124–Ser-130.

It belongs to the bacterial CoaD family. In terms of assembly, homohexamer. Mg(2+) is required as a cofactor.

Its subcellular location is the cytoplasm. The catalysed reaction is (R)-4'-phosphopantetheine + ATP + H(+) = 3'-dephospho-CoA + diphosphate. It participates in cofactor biosynthesis; coenzyme A biosynthesis; CoA from (R)-pantothenate: step 4/5. Its function is as follows. Reversibly transfers an adenylyl group from ATP to 4'-phosphopantetheine, yielding dephospho-CoA (dPCoA) and pyrophosphate. The chain is Phosphopantetheine adenylyltransferase from Helicobacter acinonychis (strain Sheeba).